Consider the following 73-residue polypeptide: Protein BP4C (73 aa).

Pollen specific.

This chain is Protein BP4C (BP4C), found in Brassica napus (Rape).